A 223-amino-acid polypeptide reads, in one-letter code: uncharacterized protein (223 aa).

Residues 40–70 (GSKRLKPAKFGTEGKERVEQRTERQRTGSSK) form a disordered region. The segment covering 51 to 70 (TEGKERVEQRTERQRTGSSK) has biased composition (basic and acidic residues).

This is an uncharacterized protein from Homo sapiens (Human).